Reading from the N-terminus, the 117-residue chain is Small ribosomal subunit protein uS8c (117 aa).

This sequence belongs to the universal ribosomal protein uS8 family. Part of the 30S ribosomal subunit.

Its subcellular location is the plastid. The protein localises to the chloroplast. In terms of biological role, one of the primary rRNA binding proteins, it binds directly to 16S rRNA central domain where it helps coordinate assembly of the platform of the 30S subunit. This is Small ribosomal subunit protein uS8c (rps8) from Cyanidioschyzon merolae (strain NIES-3377 / 10D) (Unicellular red alga).